The chain runs to 379 residues: Glucose-1-phosphate adenylyltransferase (379 aa).

Residues Tyr-99, Gly-164, 179-180, and Ser-190 each bind alpha-D-glucose 1-phosphate; that span reads EK.

Belongs to the bacterial/plant glucose-1-phosphate adenylyltransferase family. Homotetramer.

The enzyme catalyses alpha-D-glucose 1-phosphate + ATP + H(+) = ADP-alpha-D-glucose + diphosphate. It functions in the pathway glycan biosynthesis; glycogen biosynthesis. In terms of biological role, involved in the biosynthesis of ADP-glucose, a building block required for the elongation reactions to produce glycogen. Catalyzes the reaction between ATP and alpha-D-glucose 1-phosphate (G1P) to produce pyrophosphate and ADP-Glc. The chain is Glucose-1-phosphate adenylyltransferase from Bacillus licheniformis (strain ATCC 14580 / DSM 13 / JCM 2505 / CCUG 7422 / NBRC 12200 / NCIMB 9375 / NCTC 10341 / NRRL NRS-1264 / Gibson 46).